Consider the following 326-residue polypeptide: Putative HTH-type transcriptional regulatory protein MmarC5_0898 (326 aa).

Residues 128-183 (LRETREKLKISVGELAEISRVSRKTIYKYEQNEANPSAEVAIKIEEYLDVPLIKGI) form the HTH cro/C1-type domain. The segment at residues 139–158 (VGELAEISRVSRKTIYKYEQ) is a DNA-binding region (H-T-H motif).

This chain is Putative HTH-type transcriptional regulatory protein MmarC5_0898, found in Methanococcus maripaludis (strain C5 / ATCC BAA-1333).